We begin with the raw amino-acid sequence, 539 residues long: T-complex protein 1 subunit delta (539 aa).

A disordered region spans residues 1 to 28 (MPENVASRSGPPAAGPGNRGKGAYQDRD). Residue Arg19 is modified to Omega-N-methylarginine. Lys21 carries the N6-acetyllysine modification. The residue at position 36 (Ser36) is a Phosphoserine. Gly53 contacts ADP. ATP is bound at residue Gly53. A Mg(2+)-binding site is contributed by Asp104. ADP-binding residues include Gly105, Thr106, Thr107, Ser108, Asn172, Ser173, and Lys174. ATP-binding residues include Gly105 and Thr106. Lys174 contacts ATP. Phosphoserine is present on residues Ser184 and Ser202. N6-acetyllysine occurs at positions 288, 302, 319, and 326. Gly425 contacts ADP. A Phosphoserine modification is found at Ser444. Gln510 is an ADP binding site.

Belongs to the TCP-1 chaperonin family. As to quaternary structure, component of the chaperonin-containing T-complex (TRiC), a hexadecamer composed of two identical back-to-back stacked rings enclosing a protein folding chamber. Each ring is made up of eight different subunits: TCP1/CCT1, CCT2, CCT3, CCT4, CCT5, CCT6A/CCT6, CCT7, CCT8. Interacts with PACRG. Interacts with DNAAF4. Interacts with DLEC1.

The protein resides in the cytoplasm. The protein localises to the melanosome. It is found in the cytoskeleton. It localises to the microtubule organizing center. Its subcellular location is the centrosome. The protein resides in the cilium basal body. The catalysed reaction is ATP + H2O = ADP + phosphate + H(+). Component of the chaperonin-containing T-complex (TRiC), a molecular chaperone complex that assists the folding of actin, tubulin and other proteins upon ATP hydrolysis. The TRiC complex mediates the folding of WRAP53/TCAB1, thereby regulating telomere maintenance. As part of the TRiC complex may play a role in the assembly of BBSome, a complex involved in ciliogenesis regulating transports vesicles to the cilia. This Rattus norvegicus (Rat) protein is T-complex protein 1 subunit delta (Cct4).